A 402-amino-acid chain; its full sequence is Rubredoxin-oxygen oxidoreductase (402 aa).

The tract at residues 30–216 (PMGTTYNAYL…KAIETLVGAG (187 aa)) is zinc metallo-hydrolase. His79, Glu81, Asp83, His146, Asp165, and His226 together coordinate Fe cation. Positions 255 to 393 (VVIFYDSMWH…QLKTMAQTIA (139 aa)) constitute a Flavodoxin-like domain.

In the N-terminal section; belongs to the zinc metallo-hydrolase group 3 family. Homodimer. FMN serves as cofactor. Fe cation is required as a cofactor.

It functions in the pathway energy metabolism; electron transfer. Catalyzes the four-electron reduction of one oxygen molecule to two water molecules. The chain is Rubredoxin-oxygen oxidoreductase (roo) from Megalodesulfovibrio gigas (strain ATCC 19364 / DSM 1382 / NCIMB 9332 / VKM B-1759) (Desulfovibrio gigas).